The primary structure comprises 140 residues: Ribonuclease P protein subunit p20 (140 aa).

This sequence belongs to the histone-like Alba family. In terms of assembly, component of nuclear RNase P and RNase MRP complexes. RNase P consists of a catalytic RNA moiety and 10 different protein chains; POP1, POP4, POP5, POP7, RPP14, RPP21, RPP25, RPP30, RPP38 and RPP40. Within the RNase P complex, POP1, POP7 and RPP25 form the 'finger' subcomplex, POP5, RPP14, RPP40 and homodimeric RPP30 form the 'palm' subcomplex, and RPP21, POP4 and RPP38 form the 'wrist' subcomplex. All subunits of the RNase P complex interact with the catalytic RNA. Several subunits of RNase P are also part of the RNase MRP complex. RNase MRP consists of a catalytic RNA moiety and about 8 protein subunits; POP1, POP7, RPP25, RPP30, RPP38, RPP40 and possibly also POP4 and POP5. Interacts with SMN1. POP7 forms a heterodimer with RPP25 that binds to the P3 stem loop of the catalytic RNA.

The protein resides in the nucleus. It localises to the nucleolus. It is found in the cytoplasm. The protein localises to the cytoplasmic granule. In terms of biological role, component of ribonuclease P, a ribonucleoprotein complex that generates mature tRNA molecules by cleaving their 5'-ends. Also a component of the MRP ribonuclease complex, which cleaves pre-rRNA sequences. The protein is Ribonuclease P protein subunit p20 (POP7) of Bos taurus (Bovine).